The sequence spans 359 residues: Peptide chain release factor 1 (359 aa).

Position 235 is an N5-methylglutamine (Gln-235). A disordered region spans residues 283–309 (QKAESERSQARRSQVGSGDRSERIRTY).

Belongs to the prokaryotic/mitochondrial release factor family. Post-translationally, methylated by PrmC. Methylation increases the termination efficiency of RF1.

It localises to the cytoplasm. Peptide chain release factor 1 directs the termination of translation in response to the peptide chain termination codons UAG and UAA. The protein is Peptide chain release factor 1 of Brucella melitensis biotype 2 (strain ATCC 23457).